The following is a 1091-amino-acid chain: ATP-dependent helicase/deoxyribonuclease subunit B (1091 aa).

It belongs to the helicase family. AddB/RexB type 2 subfamily. Heterodimer of AddA and RexB. The cofactor is Mg(2+).

In terms of biological role, the heterodimer acts as both an ATP-dependent DNA helicase and an ATP-dependent, dual-direction single-stranded exonuclease. Recognizes the chi site generating a DNA molecule suitable for the initiation of homologous recombination. This subunit has 5' -&gt; 3' nuclease activity but not helicase activity. The sequence is that of ATP-dependent helicase/deoxyribonuclease subunit B from Streptococcus pneumoniae serotype 19F (strain G54).